The primary structure comprises 270 residues: GTP cyclohydrolase FolE2 (270 aa).

Belongs to the GTP cyclohydrolase IV family.

The enzyme catalyses GTP + H2O = 7,8-dihydroneopterin 3'-triphosphate + formate + H(+). The protein operates within cofactor biosynthesis; 7,8-dihydroneopterin triphosphate biosynthesis; 7,8-dihydroneopterin triphosphate from GTP: step 1/1. Functionally, converts GTP to 7,8-dihydroneopterin triphosphate. This is GTP cyclohydrolase FolE2 from Cupriavidus pinatubonensis (strain JMP 134 / LMG 1197) (Cupriavidus necator (strain JMP 134)).